The chain runs to 69 residues: Guanine nucleotide-binding protein subunit gamma (69 aa).

At serine 2 the chain carries N-acetylserine. Cysteine 66 bears the Cysteine methyl ester mark. The S-geranylgeranyl cysteine moiety is linked to residue cysteine 66. The propeptide at 67-69 is removed in mature form; it reads SVL.

It belongs to the G protein gamma family. As to quaternary structure, g proteins are composed of 3 units, alpha, beta and gamma. Interacts with gpbA, and this requires phlp1. This protein is thought to be subject to lipidation, and this requires phlp1.

Its subcellular location is the cell membrane. Functionally, guanine nucleotide-binding proteins (G proteins) are involved as a modulator or transducer in various transmembrane signaling systems. This major G-protein of the squid photoreceptor is involved in visual transduction. The beta and gamma chains are required for the GTPase activity, for replacement of GDP by GTP, and for G protein-effector interaction. Required for normal chemotaxis in response to cAMP. This Dictyostelium discoideum (Social amoeba) protein is Guanine nucleotide-binding protein subunit gamma (gpgA).